Here is a 475-residue protein sequence, read N- to C-terminus: Aspartyl/glutamyl-tRNA(Asn/Gln) amidotransferase subunit B (475 aa).

This sequence belongs to the GatB/GatE family. GatB subfamily. In terms of assembly, heterotrimer of A, B and C subunits.

The catalysed reaction is L-glutamyl-tRNA(Gln) + L-glutamine + ATP + H2O = L-glutaminyl-tRNA(Gln) + L-glutamate + ADP + phosphate + H(+). It catalyses the reaction L-aspartyl-tRNA(Asn) + L-glutamine + ATP + H2O = L-asparaginyl-tRNA(Asn) + L-glutamate + ADP + phosphate + 2 H(+). Functionally, allows the formation of correctly charged Asn-tRNA(Asn) or Gln-tRNA(Gln) through the transamidation of misacylated Asp-tRNA(Asn) or Glu-tRNA(Gln) in organisms which lack either or both of asparaginyl-tRNA or glutaminyl-tRNA synthetases. The reaction takes place in the presence of glutamine and ATP through an activated phospho-Asp-tRNA(Asn) or phospho-Glu-tRNA(Gln). The chain is Aspartyl/glutamyl-tRNA(Asn/Gln) amidotransferase subunit B from Staphylococcus epidermidis (strain ATCC 12228 / FDA PCI 1200).